Consider the following 486-residue polypeptide: UDP-N-acetylglucosamine pyrophosphorylase (486 aa).

The short motif at 109 to 112 (MAGG) is the Substrate binding element. UTP-binding positions include 109-112 (MAGG), K123, Q199, and G226. Residue N227 coordinates substrate. D257 is a binding site for UTP. The Substrate binding signature appears at 309–310 (EY). K389 contacts UTP. K421 is a binding site for substrate.

It belongs to the UDPGP type 1 family.

The protein resides in the cytoplasm. The catalysed reaction is N-acetyl-alpha-D-glucosamine 1-phosphate + UTP + H(+) = UDP-N-acetyl-alpha-D-glucosamine + diphosphate. Its pathway is nucleotide-sugar biosynthesis; UDP-N-acetyl-alpha-D-glucosamine biosynthesis; UDP-N-acetyl-alpha-D-glucosamine from N-acetyl-alpha-D-glucosamine 1-phosphate: step 1/1. This is UDP-N-acetylglucosamine pyrophosphorylase (UAP1) from Candida albicans (Yeast).